Reading from the N-terminus, the 370-residue chain is uncharacterized protein (370 aa).

One can recognise an OBG-type G domain in the interval 62 to 293 (ATVALVGFPS…LKERMWRALG (232 aa)). Residues 68–75 (GFPSVGKS), 114–118 (DVPGL), and 243–246 (NKVD) each bind GTP. The TGS domain maps to 293 to 368 (GLIRIYMDKP…EDEDVLRVVA (76 aa)).

It belongs to the TRAFAC class OBG-HflX-like GTPase superfamily. OBG GTPase family.

This is an uncharacterized protein from Halobacterium salinarum (strain ATCC 700922 / JCM 11081 / NRC-1) (Halobacterium halobium).